Consider the following 274-residue polypeptide: Thiazole synthase (274 aa).

The active-site Schiff-base intermediate with DXP is lysine 111. Residues glycine 172, 198 to 199 (AG), and 220 to 221 (NS) each bind 1-deoxy-D-xylulose 5-phosphate. The segment at 251 to 274 (RLPERAAASPSSPTTGIIAEAKTK) is disordered.

The protein belongs to the ThiG family. As to quaternary structure, homotetramer. Forms heterodimers with either ThiH or ThiS.

Its subcellular location is the cytoplasm. It catalyses the reaction [ThiS sulfur-carrier protein]-C-terminal-Gly-aminoethanethioate + 2-iminoacetate + 1-deoxy-D-xylulose 5-phosphate = [ThiS sulfur-carrier protein]-C-terminal Gly-Gly + 2-[(2R,5Z)-2-carboxy-4-methylthiazol-5(2H)-ylidene]ethyl phosphate + 2 H2O + H(+). It participates in cofactor biosynthesis; thiamine diphosphate biosynthesis. Its function is as follows. Catalyzes the rearrangement of 1-deoxy-D-xylulose 5-phosphate (DXP) to produce the thiazole phosphate moiety of thiamine. Sulfur is provided by the thiocarboxylate moiety of the carrier protein ThiS. In vitro, sulfur can be provided by H(2)S. This chain is Thiazole synthase, found in Prochlorococcus marinus (strain MIT 9313).